Here is a 146-residue protein sequence, read N- to C-terminus: Ribosome-binding factor A (146 aa).

A disordered region spans residues 127–146 (EFAGEADPYKKPEDDEAAES).

It belongs to the RbfA family. In terms of assembly, monomer. Binds 30S ribosomal subunits, but not 50S ribosomal subunits or 70S ribosomes.

It localises to the cytoplasm. In terms of biological role, one of several proteins that assist in the late maturation steps of the functional core of the 30S ribosomal subunit. Associates with free 30S ribosomal subunits (but not with 30S subunits that are part of 70S ribosomes or polysomes). Required for efficient processing of 16S rRNA. May interact with the 5'-terminal helix region of 16S rRNA. In Renibacterium salmoninarum (strain ATCC 33209 / DSM 20767 / JCM 11484 / NBRC 15589 / NCIMB 2235), this protein is Ribosome-binding factor A.